A 458-amino-acid chain; its full sequence is UDP-N-acetylmuramate--L-alanine ligase (458 aa).

118–124 contributes to the ATP binding site; that stretch reads GTHGKTT.

The protein belongs to the MurCDEF family.

The protein localises to the cytoplasm. It catalyses the reaction UDP-N-acetyl-alpha-D-muramate + L-alanine + ATP = UDP-N-acetyl-alpha-D-muramoyl-L-alanine + ADP + phosphate + H(+). Its pathway is cell wall biogenesis; peptidoglycan biosynthesis. In terms of biological role, cell wall formation. The protein is UDP-N-acetylmuramate--L-alanine ligase of Clostridium botulinum (strain Kyoto / Type A2).